The chain runs to 161 residues: Nucleotide-binding protein Csal_2524 (161 aa).

Belongs to the YajQ family.

Its function is as follows. Nucleotide-binding protein. This is Nucleotide-binding protein Csal_2524 from Chromohalobacter salexigens (strain ATCC BAA-138 / DSM 3043 / CIP 106854 / NCIMB 13768 / 1H11).